The sequence spans 110 residues: Large ribosomal subunit protein uL22 (110 aa).

It belongs to the universal ribosomal protein uL22 family. As to quaternary structure, part of the 50S ribosomal subunit.

Functionally, this protein binds specifically to 23S rRNA; its binding is stimulated by other ribosomal proteins, e.g. L4, L17, and L20. It is important during the early stages of 50S assembly. It makes multiple contacts with different domains of the 23S rRNA in the assembled 50S subunit and ribosome. The globular domain of the protein is located near the polypeptide exit tunnel on the outside of the subunit, while an extended beta-hairpin is found that lines the wall of the exit tunnel in the center of the 70S ribosome. In Hahella chejuensis (strain KCTC 2396), this protein is Large ribosomal subunit protein uL22.